The chain runs to 120 residues: NAD(P)H-quinone oxidoreductase subunit 3 (120 aa).

The next 3 membrane-spanning stretches (helical) occupy residues 10–30, 64–84, and 89–109; these read FLGFLLIAAAVPVLALVTNLI, MFALVFVIFDVETVFLYPWAV, and LGLLAFIEALIFIAILVIALA.

The protein belongs to the complex I subunit 3 family. As to quaternary structure, NDH-1 can be composed of about 15 different subunits; different subcomplexes with different compositions have been identified which probably have different functions.

Its subcellular location is the cellular thylakoid membrane. The catalysed reaction is a plastoquinone + NADH + (n+1) H(+)(in) = a plastoquinol + NAD(+) + n H(+)(out). The enzyme catalyses a plastoquinone + NADPH + (n+1) H(+)(in) = a plastoquinol + NADP(+) + n H(+)(out). In terms of biological role, NDH-1 shuttles electrons from an unknown electron donor, via FMN and iron-sulfur (Fe-S) centers, to quinones in the respiratory and/or the photosynthetic chain. The immediate electron acceptor for the enzyme in this species is believed to be plastoquinone. Couples the redox reaction to proton translocation, and thus conserves the redox energy in a proton gradient. Cyanobacterial NDH-1 also plays a role in inorganic carbon-concentration. In Prochlorococcus marinus (strain AS9601), this protein is NAD(P)H-quinone oxidoreductase subunit 3.